The chain runs to 2871 residues: Fibrillin-1 (2871 aa).

Residues 1–24 (MRRGRLLEVALGFTVLLASYTSHR) form the signal peptide. Residues 25–44 (AEANLEAGNGKETRASRAKR) constitute a propeptide that is removed on maturation. Over residues 29–39 (LEAGNGKETRA) the composition is skewed to basic and acidic residues. The disordered stretch occupies residues 29 to 49 (LEAGNGKETRASRAKRRGGGG). The interval 45-81 (RGGGGHDALKGPNVCGSRYNAYCCPGWKTLPGGNQCI) is fibrillin unique N-terminal (FUN) domain. The interval 45-450 (RGGGGHDALK…PPRVLPVNVT (406 aa)) is N-terminal domain. 11 disulfides stabilise this stretch: Cys59-Cys68, Cys67-Cys80, Cys85-Cys94, Cys89-Cys100, Cys102-Cys111, Cys119-Cys129, Cys123-Cys134, Cys136-Cys145, Cys150-Cys160, Cys154-Cys166, and Cys168-Cys177. EGF-like domains lie at 81 to 112 (IVPI…PSCG), 115 to 146 (SIQH…THCG), and 147 to 178 (QPVC…PQCE). The interaction with MFAP4 stretch occupies residues 119-329 (CNIRCMNGGS…YTSPDGTRCI (211 aa)). Positions 184-236 (GPCFTVVSNQMCQGQLSGIVCTKTLCCATVGRAWGHPCEMCPAQPHPCRRGFI) constitute a TB 1 domain. Residues 195–221 (CQGQLSGIVCTKTLCCATVGRAWGHPC) are hybrid domain 1. The EGF-like 4; calcium-binding domain maps to 246-287 (DVDECQAIPGLCQGGNCINTVGSFECKCPAGHKFNEVSQKCE). Intrachain disulfides connect Cys250/Cys262, Cys257/Cys271, Cys273/Cys286, Cys292/Cys304, Cys299/Cys313, and Cys315/Cys328. Ser268 carries O-linked (Glc) serine glycosylation. One can recognise an EGF-like 5; calcium-binding domain in the interval 288–329 (DIDECSTIPGICDGGECTNTVSSYFCKCPPGFYTSPDGTRCI). The region spanning 334–389 (GYCYTALTNGRCSNQLPQSITKMQCCCDVGRCWSPGVTVTPEMCPIRATEDFNKLC) is the TB 2 domain. An N-linked (GlcNAc...) asparagine glycan is attached at Asn448. The region spanning 449-489 (VTDYCQLFRYLCHNGRCIPTPGSYRCECNKGFQLDLRGECI) is the EGF-like 6 domain. 15 disulfides stabilise this stretch: Cys453-Cys465, Cys460-Cys474, Cys476-Cys488, Cys494-Cys504, Cys499-Cys513, Cys515-Cys528, Cys534-Cys546, Cys541-Cys555, Cys557-Cys570, Cys576-Cys587, Cys582-Cys596, Cys598-Cys611, Cys617-Cys628, Cys623-Cys637, and Cys639-Cys652. Residue Ser471 is glycosylated (O-linked (Glc) serine). An EGF-like 7; calcium-binding domain is found at 490–529 (DVDECEKNPCAGGECINNQGSYTCQCRPGYQSTLTRTECR). Ser510 carries O-linked (Glc) serine glycosylation. The EGF-like 8; calcium-binding domain occupies 530–571 (DIDECLQNGRICNNGRCINTDGSFHCVCNAGFHVTRDGKNCE). One can recognise an EGF-like 9; calcium-binding domain in the interval 572 to 612 (DMDECSIRNMCLNGMCINEDGSFKCICKPGFQLASDGRYCK). The EGF-like 10; calcium-binding domain maps to 613-653 (DINECETSGICMNGRCVNTDGSYRCECFPGLAVGLDGRVCV). One can recognise a TB 3 domain in the interval 659-711 (STCYGGYKRGQCVKPLFGAVTKSECCCASTEYAFGEPCQPCPSQNSAEYQALC). The EGF-like 11; calcium-binding domain maps to 723-764 (DINECALDPDICPNGICENLRGTYKCICNSGYEVDSTGKNCV). 16 disulfides stabilise this stretch: Cys727–Cys739, Cys734–Cys748, Cys750–Cys763, Cys769–Cys781, Cys776–Cys790, Cys792–Cys805, Cys811–Cys821, Cys816–Cys830, Cys832–Cys845, Cys853–Cys875, Cys862–Cys887, Cys876–Cys890, Cys896–Cys908, Cys914–Cys926, Cys921–Cys935, and Cys937–Cys950. The EGF-like 12; calcium-binding domain occupies 765-806 (DINECVLNSLLCDNGQCRNTPGSFVCTCPKGFIYKPDLKTCE). The EGF-like 13; calcium-binding domain maps to 807-846 (DIDECESSPCINGVCKNSPGSFICECSSESTLDPTKTICI). In terms of domain architecture, TB 4 spans 851–902 (GTCWQTIIDGRCEININGATLKSQCCSSLGAAWGSPCTPCQVDPICGKGYSR). The hybrid domain 2 stretch occupies residues 862–887 (CEININGATLKSQCCSSLGAAWGSPC). One can recognise an EGF-like 14; calcium-binding domain in the interval 910-951 (DIDECEVFPGVCKNGLCVNSKGSFKCQCPNGMTLDATGRICL). The TB 5 domain occupies 956–1008 (ETCFLRYEDEECTLPVVGRHRMDACCCSVGAAWGTEECEECPPRNTPEYEELC). One can recognise an EGF-like 15; calcium-binding domain in the interval 1028-1069 (DINECKMIPNLCTHGKCRNTIGSFKCRCDSGFALDSEERNCI). 43 disulfides stabilise this stretch: Cys1032/Cys1044, Cys1039/Cys1053, Cys1055/Cys1068, Cys1074/Cys1086, Cys1081/Cys1095, Cys1097/Cys1111, Cys1117/Cys1129, Cys1124/Cys1138, Cys1140/Cys1153, Cys1159/Cys1171, Cys1201/Cys1212, Cys1208/Cys1221, Cys1223/Cys1236, Cys1242/Cys1254, Cys1249/Cys1263, Cys1265/Cys1278, Cys1284/Cys1296, Cys1291/Cys1305, Cys1307/Cys1320, Cys1326/Cys1339, Cys1333/Cys1348, Cys1350/Cys1361, Cys1367/Cys1380, Cys1374/Cys1389, Cys1391/Cys1402, Cys1408/Cys1420, Cys1415/Cys1429, Cys1450/Cys1461, Cys1456/Cys1470, Cys1472/Cys1485, Cys1491/Cys1502, Cys1497/Cys1511, Cys1513/Cys1526, Cys1534/Cys1562, Cys1549/Cys1574, Cys1563/Cys1577, Cys1564/Cys1589, Cys1610/Cys1622, Cys1617/Cys1631, Cys1633/Cys1646, Cys1652/Cys1663, Cys1658/Cys1672, and Cys1674/Cys1687. Positions 1070–1112 (DIDECRISPDLCGRGQCVNTPGDFECKCDEGYESGFMMMKNCM) constitute an EGF-like 16; calcium-binding domain. The region spanning 1113-1154 (DIDECQRDPLLCRGGVCLNTEGSYRCECPSGHQMSPNISACI) is the EGF-like 17; calcium-binding domain. O-linked (Glc) serine glycosylation is present at Ser1135. N-linked (GlcNAc...) asparagine glycosylation occurs at Asn1149. Positions 1155–1196 (DINECELSAHLCPHGRCVNLIGKYQRARNPGYHSTPDRLFCV) constitute an EGF-like 18; calcium-binding domain. An EGF-like 19; calcium-binding domain is found at 1197 to 1237 (DIDECSIMNGGCETFCTNSEGSYECSCQPGFALMPDQRSCT). Ser1218 is a glycosylation site (O-linked (Glc) serine). The 42-residue stretch at 1238 to 1279 (DIDECEDNPNICDGGQCTNIPGEYRCLCYDGFMASEDMKTCV) folds into the EGF-like 20; calcium-binding domain. The EGF-like 21; calcium-binding domain maps to 1280–1321 (DVNECDLNPNICLSGTCENTKGSFICHCDMGYSGKKGKTGCT). Ser1302 is a glycosylation site (O-linked (Glc) serine). One can recognise an EGF-like 22; calcium-binding domain in the interval 1322 to 1362 (DINECEIGAHNCDRHAVCTNTAGSFNCSCSPGWIGDGIKCT). Ser1345 carries an O-linked (Glc) serine glycan. N-linked (GlcNAc...) asparagine glycosylation is present at Asn1347. The region spanning 1363–1403 (DLDECSNGTHMCSQHADCKNTMGSYRCLCKEGYTGDGFTCA) is the EGF-like 23; calcium-binding domain. Residue Asn1369 is glycosylated (N-linked (GlcNAc...) asparagine). Residue Ser1386 is glycosylated (O-linked (Glc) serine). The region spanning 1404-1445 (DLDECSENVKLCGNVQCLYAPGGYHCEYDMGFVPSADRKSCV) is the EGF-like 24; calcium-binding domain. In terms of domain architecture, EGF-like 25; calcium-binding spans 1446–1486 (DSDECSLPNICVFGTCHNLPGLFRCECEIGYELDRSGGNCT). Asn1484 carries an N-linked (GlcNAc...) asparagine glycan. An EGF-like 26; calcium-binding domain is found at 1487-1527 (DVNECLEPPTCISGNCVNTPGSYTCVCPPDFELNPTRVGCV). The O-linked (Glc) serine glycan is linked to Ser1508. The tract at residues 1528–2731 (DTRSGNCYLD…GYPKRGRKRR (1204 aa)) is C-terminal domain. One can recognise a TB 6 domain in the interval 1532 to 1589 (GNCYLDVRPRGDNGDTACSNEIGVGVSKASCCCSLGKAWGTPCEQCPPVNTSEYKILC). The short motif at 1541–1543 (RGD) is the Cell attachment site element. N-linked (GlcNAc...) asparagine glycosylation occurs at Asn1581. The EGF-like 27; calcium-binding domain occupies 1606-1647 (DIDECQELPGLCQGGKCINTFGSFQCRCPTGYYLNEDTRVCD). An O-linked (Glc) serine glycan is attached at Ser1628. Positions 1648-1688 (DVNECETPGICGPGTCYNTVGNYTCICPPDYMQVNGGNNCM) constitute an EGF-like 28; calcium-binding domain. Residue Asn1669 is glycosylated (N-linked (GlcNAc...) asparagine). The TB 7 domain occupies 1693 to 1748 (SLCYRNYYADNQTCDGELLFNMTKKMCCCSYNIGRAWNKPCEQCPIPSTDEFATLC). N-linked (GlcNAc...) asparagine glycosylation is found at Asn1703 and Asn1713. Residues 1766–1807 (DIDECREIPGVCENGVCINMVGSFRCECPVGFFYNDKLLVCE) form the EGF-like 29; calcium-binding domain. 40 disulfides stabilise this stretch: Cys1770/Cys1782, Cys1777/Cys1791, Cys1793/Cys1806, Cys1812/Cys1824, Cys1818/Cys1833, Cys1835/Cys1847, Cys1853/Cys1865, Cys1860/Cys1874, Cys1876/Cys1889, Cys1895/Cys1905, Cys1900/Cys1914, Cys1916/Cys1928, Cys1934/Cys1947, Cys1942/Cys1956, Cys1958/Cys1971, Cys1977/Cys1989, Cys1984/Cys1998, Cys2000/Cys2011, Cys2017/Cys2029, Cys2024/Cys2038, Cys2040/Cys2053, Cys2061/Cys2083, Cys2070/Cys2096, Cys2084/Cys2099, Cys2085/Cys2111, Cys2131/Cys2142, Cys2137/Cys2151, Cys2153/Cys2164, Cys2170/Cys2181, Cys2176/Cys2190, Cys2192/Cys2204, Cys2210/Cys2221, Cys2217/Cys2230, Cys2232/Cys2245, Cys2251/Cys2265, Cys2258/Cys2274, Cys2276/Cys2289, Cys2295/Cys2307, Cys2302/Cys2316, and Cys2318/Cys2331. Residues 1808–1848 (DIDECQNGPVCQRNAECINTAGSYRCDCKPGYRFTSTGQCN) form the EGF-like 30; calcium-binding domain. An O-linked (Glc) serine glycan is attached at Ser1830. The 42-residue stretch at 1849-1890 (DRNECQEIPNICSHGQCIDTVGSFYCLCHTGFKTNADQTMCL) folds into the EGF-like 31; calcium-binding domain. Residue Ser1871 is glycosylated (O-linked (Glc) serine). In terms of domain architecture, EGF-like 32; calcium-binding spans 1891–1929 (DINECERDACGNGTCRNTIGSFNCRCNHGFILSHNNDCI). N-linked (GlcNAc...) asparagine glycosylation is present at Asn1902. Ser1911 carries an O-linked (Glc) serine glycan. The EGF-like 33; calcium-binding domain occupies 1930 to 1972 (DVDECATGNGNLCRNGQCINTVGSFQCQCNEGYEVAPDGRTCV). A glycan (O-linked (Glc) serine) is linked at Ser1953. Positions 1973 to 2012 (DINECLLEPGKCAPGTCQNLDGSYRCICPPGYSLQNDKCE) constitute an EGF-like 34; calcium-binding domain. Residues 2013 to 2054 (DIDECVEEPEICALGTCSNTEGSFKCLCPDGFSLSSTGRRCQ) enclose the EGF-like 35; calcium-binding domain. The O-linked (Glc) serine glycan is linked to Ser2035. The 53-residue stretch at 2059-2111 (SYCYAKFEGGKCSSPKSRNHSKQECCCALKGEGWGDPCELCPTEPDEAFRQIC) folds into the TB 8 domain. Asn2077 carries N-linked (GlcNAc...) asparagine glycosylation. The 39-residue stretch at 2127–2165 (DMDECKEPDVCKHGQCINTDGSYRCECPFGYILEGNECV) folds into the EGF-like 36; calcium-binding domain. The O-linked (Glc) serine glycan is linked to Ser2148. The EGF-like 37; calcium-binding domain maps to 2166 to 2205 (DTDECSVGNPCGNGTCKNVIGGFECTCEEGFEPGPMMTCE). N-linked (GlcNAc...) asparagine glycosylation occurs at Asn2178. One can recognise an EGF-like 38; calcium-binding domain in the interval 2206–2246 (DINECAQNPLLCAFRCVNTYGSYECKCPTGYVLREDRRMCK). The O-linked (Glc) serine glycan is linked to Ser2227. Residues 2247–2290 (DEDECEEGKHDCAEKQMECKNLIGMYICICGPGYQRRPDGEGCV) enclose the EGF-like 39; calcium-binding domain. Residues 2291–2332 (DENECQTKPGICENGRCLNTRGSYTCECNDGFTASPTQDECL) form the EGF-like 40; calcium-binding domain. An O-linked (Glc) serine glycan is attached at Ser2313. The TB 9 domain occupies 2337–2390 (GYCFTEVLQNMCQIGSSNRNPVTKSECCCDGGRGWGPHCEICPFQGTVAFKKLC). The EGF-like 41; calcium-binding domain occupies 2402 to 2443 (DIDECKVIHDVCRNGECINDRGSYHCICKTGYTPDITGTACV). Disulfide bonds link Cys2406/Cys2418, Cys2413/Cys2427, Cys2429/Cys2442, Cys2448/Cys2459, Cys2455/Cys2468, Cys2470/Cys2483, Cys2489/Cys2500, Cys2496/Cys2509, Cys2511/Cys2522, Cys2528/Cys2541, Cys2535/Cys2550, Cys2552/Cys2565, Cys2571/Cys2581, Cys2577/Cys2590, Cys2592/Cys2605, Cys2611/Cys2622, Cys2617/Cys2631, Cys2633/Cys2646, Cys2652/Cys2663, Cys2659/Cys2672, and Cys2674/Cys2686. Residues 2444–2484 (DLNECNQAPKPCNFICKNTEGSYQCSCPKGYILQEDGRSCK) enclose the EGF-like 42; calcium-binding domain. Residue Ser2465 is glycosylated (O-linked (Glc) serine). Residues 2485-2523 (DLDECATKQHNCQFLCVNTIGSFACKCPPGFTQHHTACI) enclose the EGF-like 43; calcium-binding domain. The EGF-like 44; calcium-binding domain maps to 2524-2566 (DNNECTSDINLCGAKGICQNTPGSFTCECQRGFSLDQSGASCE). A glycan (O-linked (Glc) serine) is linked at Ser2547. The 40-residue stretch at 2567–2606 (DVDECEGNHRCQHGCQNIIGGYRCSCPQGYLQHYQWNQCV) folds into the EGF-like 45; calcium-binding domain. The 41-residue stretch at 2607 to 2647 (DENECLSAHICGGASCHNTLGSYKCMCPAGFQYEQFSGGCQ) folds into the EGF-like 46; calcium-binding domain. An O-linked (Glc) serine glycan is attached at Ser2628. The region spanning 2648-2687 (DINECGSSQAPCSYGCSNTEGGYLCGCPPGYFRIGQGHCV) is the EGF-like 47; calcium-binding domain. Ser2702 and Ser2709 each carry phosphoserine. N-linked (GlcNAc...) asparagine glycans are attached at residues Asn2734, Asn2750, and Asn2767.

Belongs to the fibrillin family. In terms of assembly, interacts with COL16A1. Interacts with integrin alpha-V/beta-3. Interacts with ADAMTS10; this interaction promotes microfibril assembly. Interacts with THSD4; this interaction promotes fibril formation. Interacts (via N-terminal domain) with FBLN2 and FBLN5. Interacts with ELN. Forms a ternary complex with ELN and FBLN2 or FBLN5 and a significant interaction with ELN seen only in the presence of FBLN2 or FBLN5. Interacts (via N-terminal domain) with LTBP2 (via C-terminal domain) in a Ca(+2)-dependent manner. Interacts (via N-terminal domain) with LTBP1 (via C-terminal domain). Interacts with integrins ITGA5:ITGB1, ITGAV:ITGB3 and ITGAV:ITGB6. Interacts (via N-terminal domain) with BMP2, BMP4, BMP7, BMP10 and GDF5. Interacts (via N-terminal domain) with MFAP2 and MFAP5. Interacts with ADAMTSL5. Interacts with MFAP4. Interacts (via N-terminal domain) with TNFSF11 in a Ca(+2)-dependent manner. Interacts (via N-terminal domain) with EFEMP2; this interaction inhibits EFEMP2 binding to LOX and ELN. In terms of processing, cleavage of N- and C-terminus by furin is required for incorporation into the extracellular matrix and assembly into microfibrils. The C-terminus, which corresponds to the Asprosin chain, was initially thought to constitute a propeptide. Fibrillin-1 and Asprosin chains are still linked together during the secretion from cells, but are subsequently separated by furin, an essential step for incorporation of Fibrillin-1 into the nascent microfibrils. Forms intermolecular disulfide bonds either with other fibrillin-1 molecules or with other components of the microfibrils. Post-translationally, O-glycosylated on serine residues by POGLUT2 and POGLUT3 which is necessary for efficient protein secretion.

It localises to the secreted. The protein localises to the extracellular space. Its subcellular location is the extracellular matrix. Its function is as follows. Structural component of the 10-12 nm diameter microfibrils of the extracellular matrix, which conveys both structural and regulatory properties to load-bearing connective tissues. Fibrillin-1-containing microfibrils provide long-term force bearing structural support. In tissues such as the lung, blood vessels and skin, microfibrils form the periphery of the elastic fiber, acting as a scaffold for the deposition of elastin. In addition, microfibrils can occur as elastin-independent networks in tissues such as the ciliary zonule, tendon, cornea and glomerulus where they provide tensile strength and have anchoring roles. Fibrillin-1 also plays a key role in tissue homeostasis through specific interactions with growth factors, such as the bone morphogenetic proteins (BMPs), growth and differentiation factors (GDFs) and latent transforming growth factor-beta-binding proteins (LTBPs), cell-surface integrins and other extracellular matrix protein and proteoglycan components. Regulates osteoblast maturation by controlling TGF-beta bioavailability and calibrating TGF-beta and BMP levels, respectively. Negatively regulates osteoclastogenesis by binding and sequestering an osteoclast differentiation and activation factor TNFSF11. This leads to disruption of TNFSF11-induced Ca(2+) signaling and impairment of TNFSF11-mediated nuclear translocation and activation of transcription factor NFATC1 which regulates genes important for osteoclast differentiation and function. Mediates cell adhesion via its binding to cell surface receptors integrins ITGAV:ITGB3 and ITGA5:ITGB1. Binds heparin and this interaction plays an important role in the assembly of microfibrils. In terms of biological role, hormone that targets the liver to increase plasma glucose levels. Secreted by white adipose tissue and circulates in the plasma. Acts in response to fasting and promotes blood glucose elevation by binding to the surface of hepatocytes. Promotes hepatocyte glucose release by activating the protein kinase A activity in the liver, resulting in rapid glucose release into the circulation. This is Fibrillin-1 from Sus scrofa (Pig).